Consider the following 317-residue polypeptide: MNKFKGNKVVLIGNGAVGSSYAFSLVNQSIVDELVIIDLDTEKVRGDVMDLKHATPYSPTTVRVKAGEYSDCHDADLVVICAGAAQKPGETRLDLVSKNLKIFKSIVGEVMASKFDGIFLVATNPVDILAYATWKFSGLPKERVIGSGTILDSARFRLLLSEAFDVAPRSVDAQIIGEHGDTELPVWSHANIAGQPLKTLLEQRPEGKAQIEQIFVQTRDAAYDIIQAKGATYYGVAMGLARITEAIFRNEDAVLTVSALLEGEYDEEDVYIGVPAVINRNGIRNVVEIPLNDEEQSKFAHSAKTLKDIMAEAEELK.

NAD(+) is bound by residues valine 17, aspartate 38, lysine 43, tyrosine 69, and 83 to 84 (GA). Glutamine 86 and arginine 92 together coordinate substrate. NAD(+) contacts are provided by residues serine 105, 122-124 (ATN), and serine 147. 124-127 (NPVD) is a substrate binding site. 152 to 155 (DSAR) is a substrate binding site. The Proton acceptor role is filled by histidine 179. Phosphotyrosine is present on tyrosine 223. A substrate-binding site is contributed by threonine 232.

This sequence belongs to the LDH/MDH superfamily. LDH family. As to quaternary structure, homotetramer.

The protein localises to the cytoplasm. It carries out the reaction (S)-lactate + NAD(+) = pyruvate + NADH + H(+). Its pathway is fermentation; pyruvate fermentation to lactate; (S)-lactate from pyruvate: step 1/1. Catalyzes the conversion of lactate to pyruvate (Potential). Appears to be the primary factor that allows S.aureus growth during nitrosative stress in both aerobically and anaerobically cultured cells. The chain is L-lactate dehydrogenase 1 from Staphylococcus aureus (strain JH1).